The primary structure comprises 424 residues: Enolase (424 aa).

Residue glutamine 162 participates in (2R)-2-phosphoglycerate binding. The active-site Proton donor is the glutamate 204. Residues aspartate 241, glutamate 284, and aspartate 311 each coordinate Mg(2+). (2R)-2-phosphoglycerate-binding residues include lysine 336, arginine 365, serine 366, and lysine 387. Lysine 336 serves as the catalytic Proton acceptor.

It belongs to the enolase family. The cofactor is Mg(2+).

Its subcellular location is the cytoplasm. The protein resides in the secreted. It localises to the cell surface. It carries out the reaction (2R)-2-phosphoglycerate = phosphoenolpyruvate + H2O. It participates in carbohydrate degradation; glycolysis; pyruvate from D-glyceraldehyde 3-phosphate: step 4/5. Catalyzes the reversible conversion of 2-phosphoglycerate (2-PG) into phosphoenolpyruvate (PEP). It is essential for the degradation of carbohydrates via glycolysis. In Rhizobium etli (strain ATCC 51251 / DSM 11541 / JCM 21823 / NBRC 15573 / CFN 42), this protein is Enolase.